Consider the following 953-residue polypeptide: 26S proteasome non-ATPase regulatory subunit 1 (953 aa).

At M1 the chain carries N-acetylmethionine; partial. The residue at position 273 (T273) is a Phosphothreonine. The tract at residues P279–P318 is disordered. Phosphoserine is present on S290. The span at S290–T303 shows a compositional bias: basic and acidic residues. K310 carries the post-translational modification N6-acetyllysine. T311 carries the post-translational modification Phosphothreonine. S315 carries the post-translational modification Phosphoserine. PC repeat units lie at residues T403 to A436, G441 to R474, G476 to E510, A511 to L545, G547 to R580, S581 to R616, A617 to R649, G651 to Q685, G686 to A726, and G729 to V761. K720 bears the N6-acetyllysine mark. A Phosphothreonine modification is found at T830. Phosphoserine is present on S834. 2 disordered regions span residues A839–P881 and A930–D953. Composition is skewed to basic and acidic residues over residues K842–E852 and A859–E872. The segment covering E936–D953 has biased composition (acidic residues).

This sequence belongs to the proteasome subunit S1 family. Component of the 19S proteasome regulatory particle complex. The 26S proteasome consists of a 20S core particle (CP) and two 19S regulatory subunits (RP). The regulatory particle is made of a lid composed of 9 subunits, a base containing 6 ATPases and few additional components including PSMD1. Interacts with ADRM1. Interacts with ZFAND1.

Its function is as follows. Component of the 26S proteasome, a multiprotein complex involved in the ATP-dependent degradation of ubiquitinated proteins. This complex plays a key role in the maintenance of protein homeostasis by removing misfolded or damaged proteins, which could impair cellular functions, and by removing proteins whose functions are no longer required. Therefore, the proteasome participates in numerous cellular processes, including cell cycle progression, apoptosis, or DNA damage repair. This Pongo abelii (Sumatran orangutan) protein is 26S proteasome non-ATPase regulatory subunit 1 (PSMD1).